We begin with the raw amino-acid sequence, 373 residues long: Sensor protein DegM (373 aa).

4 helical membrane-spanning segments follow: residues 27 to 47, 57 to 77, 91 to 111, and 122 to 142; these read ILLA…AIAV, LFLL…LCVN, YASL…LYLI, and VAGW…TYLF. One can recognise a Histidine kinase domain in the interval 170–370; sequence SIAHEVRNPL…KVVLSLPIEK (201 aa). His-173 is subject to Phosphohistidine; by autocatalysis.

It is found in the cell membrane. The catalysed reaction is ATP + protein L-histidine = ADP + protein N-phospho-L-histidine.. In terms of biological role, involved in a sensory transduction pathway that enhances the production of minor proteases. This Bacillus sp. (strain B21-2) protein is Sensor protein DegM (degM).